The sequence spans 285 residues: MTAQIIDGKLISQTVRSEVGARVKARIEAGLRAPGLAVVLVGQDPASQVYVGSKRRACEEVGFVSKSYDLPTTTTEAELLTLIDTLNQDPEIDGILVQLPLPAGMDSTKILEHIDPEKDVDGFHPYNVGRLSQRIPKLRSCTPKGIITLLDRYNIQVRGMHAVVVGASNIVGRPMTLELLLAGCTTTTCHRFTKDLEHHIRQADLVVVAVGKPNFIPGEWIKEGAVVVDVGINRLDTGKLIGDVEFDVAKTKASYITPVPGGVGPMTVASLIENTLLACEQFHSK.

NADP(+) is bound by residues 166–168 and Ile-232; that span reads GAS.

The protein belongs to the tetrahydrofolate dehydrogenase/cyclohydrolase family. In terms of assembly, homodimer.

The enzyme catalyses (6R)-5,10-methylene-5,6,7,8-tetrahydrofolate + NADP(+) = (6R)-5,10-methenyltetrahydrofolate + NADPH. It carries out the reaction (6R)-5,10-methenyltetrahydrofolate + H2O = (6R)-10-formyltetrahydrofolate + H(+). It participates in one-carbon metabolism; tetrahydrofolate interconversion. Its function is as follows. Catalyzes the oxidation of 5,10-methylenetetrahydrofolate to 5,10-methenyltetrahydrofolate and then the hydrolysis of 5,10-methenyltetrahydrofolate to 10-formyltetrahydrofolate. This Aliivibrio salmonicida (strain LFI1238) (Vibrio salmonicida (strain LFI1238)) protein is Bifunctional protein FolD.